The sequence spans 356 residues: Pavine N-methyltransferase (356 aa).

The S-adenosyl-L-homocysteine site is built by Phe96, Ser97, Gly135, Asn159, Gln163, Asp185, Val186, and Val201. Residues Phe96, Ser97, Gly135, Asn159, Gln163, Asp185, Val186, and Val201 each contribute to the S-adenosyl-L-methionine site. Residue Glu205 coordinates (S)-tetrahydropapaverine. Cys331 is an active-site residue.

The protein belongs to the CFA/CMAS family. Homodimer.

The protein resides in the cytoplasm. The enzyme catalyses (+-)-pavine + S-adenosyl-L-methionine = N-methylpavine + S-adenosyl-L-homocysteine + H(+). It carries out the reaction (S)-reticuline + S-adenosyl-L-methionine = (S)-tembetarine + S-adenosyl-L-homocysteine + H(+). It catalyses the reaction (S)-stylopine + S-adenosyl-L-methionine = (S)-cis-N-methylstylopine + S-adenosyl-L-homocysteine. The catalysed reaction is (S)-scoulerine + S-adenosyl-L-methionine = (S)-cis-N-methylscoulerine + S-adenosyl-L-homocysteine. The enzyme catalyses (S)-tetrahydropapaverine + S-adenosyl-L-methionine = (S)-N-methyltetrahydropapaverine + S-adenosyl-L-homocysteine + H(+). It carries out the reaction (S)-tetrahydropalmatine + S-adenosyl-L-methionine = (S)-cis-N-methyltetrahydropalmatine + S-adenosyl-L-homocysteine. It functions in the pathway alkaloid biosynthesis. Its activity is regulated as follows. In the presence of a racemic mixture of tetrahydropapaverine (THP), one molecule of (S)-THP binds in a productive mode, while one molecule of (R)-THP is bound next to it in a non-productive mode. The (R)-THP seems to inhibit the release of products from the enzyme when higher concentrations of the racemic substrate are added to the reaction. N-methyltransferase with a substrate preference for (+-)-pavine and (S)-reticuline, but also active with the protoberberines scoulerine and stylopine and, to a lesser extent, tetrahydropapaverine (THP) and tetrahydropalmatine. Is not active on (R)-reticuline, cryptopine, glaucine, codeine, canadaline, noscapine and berbamine. The polypeptide is Pavine N-methyltransferase (Thalictrum flavum subsp. glaucum (Yellow meadow rue)).